A 365-amino-acid chain; its full sequence is Bifunctional chorismate mutase/prephenate dehydratase (365 aa).

One can recognise a Chorismate mutase domain in the interval 1-96 (MSEADQLKAL…SCLALEQPLR (96 aa)). 4 residues coordinate substrate: Arg-11, Arg-28, Lys-39, and Glu-57. The Prephenate dehydratase domain occupies 97 to 272 (VAYLGPEGTF…NSTRFLIIGS (176 aa)). Positions 284–361 (SIIVSMRNKP…VALKVLGSYP (78 aa)) constitute an ACT domain.

The protein resides in the cytoplasm. The catalysed reaction is chorismate = prephenate. The enzyme catalyses prephenate + H(+) = 3-phenylpyruvate + CO2 + H2O. It participates in amino-acid biosynthesis; L-phenylalanine biosynthesis; phenylpyruvate from prephenate: step 1/1. It functions in the pathway metabolic intermediate biosynthesis; prephenate biosynthesis; prephenate from chorismate: step 1/1. Functionally, catalyzes the Claisen rearrangement of chorismate to prephenate and the decarboxylation/dehydration of prephenate to phenylpyruvate. This chain is Bifunctional chorismate mutase/prephenate dehydratase, found in Stutzerimonas stutzeri (Pseudomonas stutzeri).